A 349-amino-acid chain; its full sequence is Dihydroorotate dehydrogenase (quinone) (349 aa).

FMN is bound by residues 67 to 71 and Thr-91; that span reads AGLDK. Lys-71 contacts substrate. Residue 116 to 120 participates in substrate binding; the sequence is NRLGF. FMN contacts are provided by Asn-147 and Asn-180. Asn-180 serves as a coordination point for substrate. The active-site Nucleophile is Ser-183. Residue Asn-185 coordinates substrate. FMN contacts are provided by Lys-225 and Thr-253. Residue 254 to 255 coordinates substrate; sequence NT. FMN is bound by residues Gly-276, Gly-305, and 326–327; that span reads YT.

The protein belongs to the dihydroorotate dehydrogenase family. Type 2 subfamily. As to quaternary structure, monomer. FMN serves as cofactor.

It localises to the cell membrane. The enzyme catalyses (S)-dihydroorotate + a quinone = orotate + a quinol. The protein operates within pyrimidine metabolism; UMP biosynthesis via de novo pathway; orotate from (S)-dihydroorotate (quinone route): step 1/1. Its function is as follows. Catalyzes the conversion of dihydroorotate to orotate with quinone as electron acceptor. This is Dihydroorotate dehydrogenase (quinone) from Bordetella avium (strain 197N).